The following is an 826-amino-acid chain: Homeobox-leucine zipper protein HDG5 (826 aa).

Disordered stretches follow at residues M1–P34 and E69–T119. Low complexity predominate over residues P23 to P34. The segment covering E88–E105 has biased composition (basic and acidic residues). Positions A110–T119 are enriched in basic residues. The segment at residues K111–Q170 is a DNA-binding region (homeobox). The stretch at Q165 to N189 forms a coiled coil. Residues A314–S558 enclose the START domain.

It belongs to the HD-ZIP homeobox family. Class IV subfamily. In terms of tissue distribution, expressed in shoot apical meristem (SAM) with higher levels in L1 cells and the epidermal layer of young leaves. Expressed in the L1 of apical inflorescence meristems, early flower primordia, carpel and stamen filament epidermis, ovule primordia, nucellus and chalaze.

It is found in the nucleus. In terms of biological role, probable transcription factor. Involved, together with PDF2, in the regulation of flower organs development by promoting the expression of APETALA 3 (AP3) in the epidermis and internal cell layers of developing flowers. In Arabidopsis thaliana (Mouse-ear cress), this protein is Homeobox-leucine zipper protein HDG5.